A 557-amino-acid chain; its full sequence is D-arabinono-1,4-lactone oxidase (557 aa).

In terms of domain architecture, FAD-binding PCMH-type spans 26–209 (FFCKPQAIFQ…THVTLRTIPK (184 aa)). H63 carries the pros-8alpha-FAD histidine modification.

This sequence belongs to the oxygen-dependent FAD-linked oxidoreductase family. FAD is required as a cofactor.

It localises to the mitochondrion membrane. It catalyses the reaction D-arabinono-1,4-lactone + O2 = dehydro-D-arabinono-1,4-lactone + H2O2 + H(+). Its pathway is cofactor biosynthesis; D-erythroascorbate biosynthesis; dehydro-D-arabinono-1,4-lactone from D-arabinose: step 2/2. The sequence is that of D-arabinono-1,4-lactone oxidase (ALO1) from Debaryomyces hansenii (strain ATCC 36239 / CBS 767 / BCRC 21394 / JCM 1990 / NBRC 0083 / IGC 2968) (Yeast).